The sequence spans 410 residues: MSVFDSKFKGIHVYSEIGELESVLVHEPGREIDYITPARLDELLFSAILESHDARKEHKQFVAELKANDINVVELIDLVAETYDLASQEAKDKLIEEFLEDSEPVLSEEHKVVVRNFLKAKKTSRELVEIMMAGITKYDLGIEADHELIVDPMPNLYFTRDPFASVGNGVTIHYMRYKVRQRETLFSRFVFSNHPKLINTPWYYDPSLKLSIEGGDVFIYNNDTLVVGVSERTDLQTVTLLAKNIVANKECEFKRIVAINVPKWTNLMHLDTWLTMLDKDKFLYSPIANDVFKFWDYDLVNGGAEPQPVENGLPLEGLLQSIINKKPVLIPIAGEGASQMEIERETHFDGTNYLAIRPGVVIGYSRNEKTNAALEAAGIKVLPFHGNQLSLGMGNARCMSMPLSRKDVKW.

Cys398 serves as the catalytic Amidino-cysteine intermediate.

This sequence belongs to the arginine deiminase family. As to quaternary structure, homodimer.

The protein localises to the cytoplasm. It catalyses the reaction L-arginine + H2O = L-citrulline + NH4(+). It participates in amino-acid degradation; L-arginine degradation via ADI pathway; carbamoyl phosphate from L-arginine: step 1/2. The protein is Arginine deiminase (arcA) of Mycoplasmopsis arginini (Mycoplasma arginini).